Reading from the N-terminus, the 1136-residue chain is Coiled-coil domain-containing protein 136 (1136 aa).

The tract at residues 1–46 (MQAMDGEVLLPALYEEEEEEEEEEEEVEEEQVEKGGSLGSLSMGKH) is disordered. The segment covering 14–31 (YEEEEEEEEEEEEVEEEQ) has biased composition (acidic residues). Serine 50 carries the phosphoserine modification. 2 coiled-coil regions span residues 293-631 (VMQL…QNQE) and 681-730 (LQAL…QTQS). Disordered regions lie at residues 741-773 (GKNS…KSYV), 814-837 (GSVS…DPAE), 965-990 (NRPS…NGVR), and 1040-1111 (KKER…PDPP). Polar residues predominate over residues 743–752 (NSGSRAPSTE). Positions 839 to 972 (EDLEHFEETV…KENRPSISSE (134 aa)) form a coiled coil. Residues 976–989 (KNVNKNMNKNANGV) show a composition bias toward low complexity. The stretch at 1017 to 1057 (YYKASQRRLDELMKEEKEIEEARKKEREKKAKKDLCKLATN) forms a coiled coil. Residues 1040–1052 (KKEREKKAKKDLC) are compositionally biased toward basic and acidic residues. Residues 1067-1091 (EPTEDEEENFEEYREGEDESCEAAE) show a composition bias toward acidic residues. Residues 1112–1132 (IFSLPLVGLVVISALLWCWWA) traverse the membrane as a helical segment.

In terms of tissue distribution, present at high level in testis (at protein level).

Its subcellular location is the cytoplasmic vesicle. The protein resides in the secretory vesicle. The protein localises to the acrosome membrane. Its function is as follows. May play a role in acrosome formation in spermatogenesis and in fertilization. This is Coiled-coil domain-containing protein 136 (Ccdc136) from Mus musculus (Mouse).